The sequence spans 260 residues: Activator of 90 kDa heat shock protein ATPase homolog 2 (260 aa).

It belongs to the AHA1 family.

In terms of biological role, co-chaperone that stimulates HSP90 ATPase activity. The sequence is that of Activator of 90 kDa heat shock protein ATPase homolog 2 (AHSA2) from Bos taurus (Bovine).